The following is a 1278-amino-acid chain: Cytoplasmic FMR1-interacting protein 2 (1278 aa).

K1062 carries the post-translational modification N6-acetyllysine.

The protein belongs to the CYFIP family. As to quaternary structure, component of the WAVE1 complex composed of ABI2, CYFIP2, BRK1, NCKAP1 and WASF1/WAVE1. Interacts with FMR1, FXR1 and FXR2. Interacts with FMR1 isoform 6; the interaction occurs in a RNA-dependent manner. Interacts with RAC1 (activated form) which causes the complex to dissociate, releasing activated WASF1. The complex can also be activated by NCK1. Interacts with SHANK3; the interaction mediates the association of SHANK3 with the WAVE1 complex. Interacts with TMEM108 (via N-terminus); the interaction associates TMEM108 with the WAVE1 complex. As to expression, expressed in T-cells. Increased expression is observed in CD4(+) T-lymphocytes from patients with multiple sclerosis (at protein level).

The protein resides in the cytoplasm. The protein localises to the nucleus. It localises to the perinuclear region. It is found in the synapse. Its subcellular location is the synaptosome. In terms of biological role, involved in T-cell adhesion and p53/TP53-dependent induction of apoptosis. Does not bind RNA. As component of the WAVE1 complex, required for BDNF-NTRK2 endocytic trafficking and signaling from early endosomes. The sequence is that of Cytoplasmic FMR1-interacting protein 2 from Homo sapiens (Human).